Reading from the N-terminus, the 189-residue chain is dCTP deaminase, dUMP-forming (189 aa).

DCTP contacts are provided by residues 101 to 106 (KSSLGR), Asp-119, 127 to 129 (TLE), Gln-148, Tyr-162, and Gln-174. Catalysis depends on Glu-129, which acts as the Proton donor/acceptor. Residues 166-189 (AVGSKYQGQRGPTPSRSHLNFIKS) form a disordered region. Residues 171 to 189 (YQGQRGPTPSRSHLNFIKS) show a composition bias toward polar residues.

Belongs to the dCTP deaminase family. Homotrimer.

The catalysed reaction is dCTP + 2 H2O = dUMP + NH4(+) + diphosphate. Its pathway is pyrimidine metabolism; dUMP biosynthesis; dUMP from dCTP: step 1/1. Functionally, bifunctional enzyme that catalyzes both the deamination of dCTP to dUTP and the hydrolysis of dUTP to dUMP without releasing the toxic dUTP intermediate. This Mycolicibacterium smegmatis (strain ATCC 700084 / mc(2)155) (Mycobacterium smegmatis) protein is dCTP deaminase, dUMP-forming.